A 148-amino-acid chain; its full sequence is Aspartate carbamoyltransferase regulatory chain (148 aa).

Residues C106, C111, C134, and C137 each coordinate Zn(2+).

It belongs to the PyrI family. Contains catalytic and regulatory chains. Zn(2+) is required as a cofactor.

Its function is as follows. Involved in allosteric regulation of aspartate carbamoyltransferase. In Methanococcus maripaludis (strain C5 / ATCC BAA-1333), this protein is Aspartate carbamoyltransferase regulatory chain.